Reading from the N-terminus, the 428-residue chain is Zinc-type alcohol dehydrogenase B (428 aa).

Residues cysteine 116, histidine 137, cysteine 167, cysteine 170, cysteine 173, and cysteine 181 each contribute to the Zn(2+) site. An N6-benzoyllysine modification is found at lysine 393.

It belongs to the zinc-containing alcohol dehydrogenase family. Class-III subfamily. In terms of assembly, homodimer. Zn(2+) is required as a cofactor. Benzoylation at lys-393 by gcnE leads to the activation od adhB.

The catalysed reaction is a primary alcohol + NAD(+) = an aldehyde + NADH + H(+). It carries out the reaction a secondary alcohol + NAD(+) = a ketone + NADH + H(+). Its function is as follows. Zinc-type alcohol dehydrogenase involved in development, secondary metabolism, pathogenicity, and stress response. Specifically controls the formation of sclerotia and the biosynthesis of aflatoxin. Contribute to seed colonization of A flavus on host maize seed. The protein is Zinc-type alcohol dehydrogenase B of Aspergillus flavus (strain ATCC 200026 / FGSC A1120 / IAM 13836 / NRRL 3357 / JCM 12722 / SRRC 167).